Consider the following 188-residue polypeptide: Protease-associated domain-containing protein 1 (188 aa).

The first 21 residues, 1–21, serve as a signal peptide directing secretion; that stretch reads MVPGAAGWCCLVLWLPACVAA. The 81-residue stretch at 83–163 folds into the PA domain; the sequence is IQDQIALVER…RSLEQHGLPW (81 aa). Asn-171 carries an N-linked (GlcNAc...) asparagine glycan.

In terms of processing, N-glycosylated; required for efficient secretion. Highly expressed in skeletal muscle, heart and liver. Expressed at intermediate level in kidney.

It localises to the secreted. Plays a role in the modulation of physical activity and adiposity. This Homo sapiens (Human) protein is Protease-associated domain-containing protein 1.